Consider the following 503-residue polypeptide: Cytochrome P450 3A29 (503 aa).

C442 serves as a coordination point for heme.

It belongs to the cytochrome P450 family. It depends on heme as a cofactor.

Its subcellular location is the endoplasmic reticulum membrane. The protein resides in the microsome membrane. The enzyme catalyses an organic molecule + reduced [NADPH--hemoprotein reductase] + O2 = an alcohol + oxidized [NADPH--hemoprotein reductase] + H2O + H(+). Cytochromes P450 are a group of heme-thiolate monooxygenases. In liver microsomes, this enzyme is involved in an NADPH-dependent electron transport pathway. It oxidizes a variety of structurally unrelated compounds, including steroids, fatty acids, and xenobiotics. This chain is Cytochrome P450 3A29 (CYP3A29), found in Sus scrofa (Pig).